The sequence spans 244 residues: Ubiquinone/menaquinone biosynthesis C-methyltransferase UbiE (244 aa).

Residues T70, D91, and 117 to 118 (DA) each bind S-adenosyl-L-methionine.

It belongs to the class I-like SAM-binding methyltransferase superfamily. MenG/UbiE family.

It catalyses the reaction a 2-demethylmenaquinol + S-adenosyl-L-methionine = a menaquinol + S-adenosyl-L-homocysteine + H(+). The catalysed reaction is a 2-methoxy-6-(all-trans-polyprenyl)benzene-1,4-diol + S-adenosyl-L-methionine = a 5-methoxy-2-methyl-3-(all-trans-polyprenyl)benzene-1,4-diol + S-adenosyl-L-homocysteine + H(+). It functions in the pathway quinol/quinone metabolism; menaquinone biosynthesis; menaquinol from 1,4-dihydroxy-2-naphthoate: step 2/2. Its pathway is cofactor biosynthesis; ubiquinone biosynthesis. Its function is as follows. Methyltransferase required for the conversion of demethylmenaquinol (DMKH2) to menaquinol (MKH2) and the conversion of 2-polyprenyl-6-methoxy-1,4-benzoquinol (DDMQH2) to 2-polyprenyl-3-methyl-6-methoxy-1,4-benzoquinol (DMQH2). This Chromobacterium violaceum (strain ATCC 12472 / DSM 30191 / JCM 1249 / CCUG 213 / NBRC 12614 / NCIMB 9131 / NCTC 9757 / MK) protein is Ubiquinone/menaquinone biosynthesis C-methyltransferase UbiE.